The primary structure comprises 363 residues: Aminopyrrolnitrin oxygenase PrnD (363 aa).

The 109-residue stretch at 29–137 folds into the Rieske domain; that stretch reads WYVAMRSNEL…TAERYGYVWV (109 aa). Cys-69, His-71, Cys-88, and His-91 together coordinate [2Fe-2S] cluster.

As to quaternary structure, homodimer. [2Fe-2S] cluster is required as a cofactor. The cofactor is Fe cation. FMN serves as cofactor.

It catalyses the reaction aminopyrrolnitrin + NADPH + 2 O2 + H(+) = pyrrolnitrin + NADP(+) + 2 H2O. Its pathway is antibiotic biosynthesis. Its function is as follows. Involved in the biosynthesis of the antifungal antibiotic pyrrolnitrin (PRN). Catalyzes the oxidation of the amino group of aminopyrrolnitrin (APRN) to a nitro group to form PRN. It has high substrate specificity toward physiological substrate aminopyrrolnitrin, p-aminobenzylamine (pABA), p-aminobenzyl alcohol, and p-aminophenyl alanine. This Pseudomonas fluorescens protein is Aminopyrrolnitrin oxygenase PrnD (prnD).